The chain runs to 819 residues: USP6 N-terminal-like protein (819 aa).

M1 bears the N-acetylmethionine mark. Residues 100–292 enclose the Rab-GAP TBC domain; sequence GIPLQLRGEV…RIWDIYIFEG (193 aa). Over residues 355–367 the composition is skewed to basic and acidic residues; the sequence is DLPEPGKEDEYPK. 2 disordered regions span residues 355–498 and 513–678; these read DLPE…ERTT and LPVA…SRPT. S389, S394, and S398 each carry phosphoserine. 2 stretches are compositionally biased toward basic and acidic residues: residues 399–414 and 432–449; these read SRRE…EHSP and KSVD…ESQR. Residues 464–476 show a composition bias toward low complexity; it reads HAAANQNSNAISN. 2 stretches are compositionally biased toward basic and acidic residues: residues 477–489 and 533–542; these read VRKE…RKPS and KALDGGEGKR. Residues S544 and S547 each carry the phosphoserine modification. A compositionally biased stretch (basic and acidic residues) spans 556 to 571; that stretch reads ESEHGASAEEGPERTH. Residues S574, S631, S644, S648, S665, S669, and S704 each carry the phosphoserine modification. Residues 642-655 show a composition bias toward polar residues; the sequence is FVSTQISPRPQINP. Y717 bears the Phosphotyrosine mark. Over residues 788–802 the composition is skewed to low complexity; sequence ASPPGYPYAGPSPSA. Residues 788–807 form a disordered region; it reads ASPPGYPYAGPSPSAHHYRN.

In terms of assembly, interacts with EPS8.

Its subcellular location is the golgi apparatus. The protein localises to the cytoplasmic vesicle. Functionally, acts as a GTPase-activating protein for RAB5A and RAB43. Involved in receptor trafficking. In complex with EPS8 inhibits internalization of EGFR. Involved in retrograde transport from the endocytic pathway to the Golgi apparatus. Involved in the transport of Shiga toxin from early and recycling endosomes to the trans-Golgi network. Required for structural integrity of the Golgi complex. The protein is USP6 N-terminal-like protein (Usp6nl) of Mus musculus (Mouse).